A 66-amino-acid polypeptide reads, in one-letter code: Stress-associated endoplasmic reticulum protein 1 (66 aa).

Positions 1–31 (MVAKQRIRMANEKHSKNITQRGNVAKTSRNA) are disordered. Positions 17 to 30 (NITQRGNVAKTSRN) are enriched in polar residues. A helical transmembrane segment spans residues 39-59 (GPWLLALFIFVVCGSAIFQII).

This sequence belongs to the RAMP4 family. As to quaternary structure, interacts with SEC61B, SEC61A1 and the SEC61 complex. Interacts with CANX.

It localises to the membrane. Its subcellular location is the endoplasmic reticulum membrane. Interacts with target proteins during their translocation into the lumen of the endoplasmic reticulum. Protects unfolded target proteins against degradation during ER stress. May facilitate glycosylation of target proteins after termination of ER stress. May modulate the use of N-glycosylation sites on target proteins. The polypeptide is Stress-associated endoplasmic reticulum protein 1 (SERP1) (Bos taurus (Bovine)).